The sequence spans 159 residues: Transcription antitermination protein NusB (159 aa).

It belongs to the NusB family.

Involved in transcription antitermination. Required for transcription of ribosomal RNA (rRNA) genes. Binds specifically to the boxA antiterminator sequence of the ribosomal RNA (rrn) operons. This chain is Transcription antitermination protein NusB, found in Stenotrophomonas maltophilia (strain K279a).